The following is a 285-amino-acid chain: 2,3,4,5-tetrahydropyridine-2,6-dicarboxylate N-succinyltransferase (285 aa).

Arginine 111 and aspartate 148 together coordinate substrate.

The protein belongs to the transferase hexapeptide repeat family. In terms of assembly, homotrimer.

It localises to the cytoplasm. The enzyme catalyses (S)-2,3,4,5-tetrahydrodipicolinate + succinyl-CoA + H2O = (S)-2-succinylamino-6-oxoheptanedioate + CoA. It functions in the pathway amino-acid biosynthesis; L-lysine biosynthesis via DAP pathway; LL-2,6-diaminopimelate from (S)-tetrahydrodipicolinate (succinylase route): step 1/3. The chain is 2,3,4,5-tetrahydropyridine-2,6-dicarboxylate N-succinyltransferase from Allorhizobium ampelinum (strain ATCC BAA-846 / DSM 112012 / S4) (Agrobacterium vitis (strain S4)).